The primary structure comprises 169 residues: MATVGDLKAVVKDTLEKRGVMGQLKARVRAEVFEALDDRSEPKPVLSPENLLINELIREYLAFNKYSYTSSVLTAETGLSEVPLDRSFLTKELNVVEDLNSQSVPILYGIVAHFLKEHEDGPCQKVEKVSTENHTFRNIPRGRNTKDTHSGPVQLTQTSTEDWHQRRHR.

Positions 1 to 104 are necessary and sufficient for homooligomerization and localization to centrosomes and pericentriolar satellites; sequence MATVGDLKAV…VVEDLNSQSV (104 aa). The 33-residue stretch at 49–81 folds into the LisH domain; the sequence is ENLLINELIREYLAFNKYSYTSSVLTAETGLSE. Positions 135–169 are disordered; that stretch reads TFRNIPRGRNTKDTHSGPVQLTQTSTEDWHQRRHR. The segment covering 151 to 160 has biased composition (polar residues); sequence GPVQLTQTST.

The protein belongs to the CEP43 family. As to quaternary structure, homooligomer; probably required for localization to centrosomes.

The protein localises to the cell projection. Its subcellular location is the cilium. The protein resides in the cytoplasm. It localises to the cytoskeleton. It is found in the cilium basal body. The protein localises to the microtubule organizing center. Its subcellular location is the centrosome. The protein resides in the cytoplasmic granule. It localises to the centriolar satellite. Involved in the biogenesis of cilia. Required for the recruitment of PLK1 to centrosomes and S phase progression. This chain is Centrosomal protein 20 (Cep20), found in Xenopus laevis (African clawed frog).